A 358-amino-acid chain; its full sequence is Alanine racemase (358 aa).

The active-site Proton acceptor; specific for D-alanine is lysine 35. N6-(pyridoxal phosphate)lysine is present on lysine 35. Arginine 130 is a binding site for substrate. The active-site Proton acceptor; specific for L-alanine is the tyrosine 255. Methionine 303 serves as a coordination point for substrate.

It belongs to the alanine racemase family. The cofactor is pyridoxal 5'-phosphate.

The enzyme catalyses L-alanine = D-alanine. It participates in amino-acid biosynthesis; D-alanine biosynthesis; D-alanine from L-alanine: step 1/1. Functionally, catalyzes the interconversion of L-alanine and D-alanine. May also act on other amino acids. In Shewanella baltica (strain OS223), this protein is Alanine racemase (alr).